Reading from the N-terminus, the 691-residue chain is 1-butanol dehydrogenase (cytochrome c) (691 aa).

The N-terminal stretch at 1-38 (MLTTTFARKREESVPLRKGIQRALLGLSCLVLSTTSFA) is a signal peptide. Residue Glu84 participates in pyrroloquinoline quinone binding. An intrachain disulfide couples Cys130 to Cys131. Pyrroloquinoline quinone is bound by residues Arg136, Thr181, and 197 to 198 (GA). Ca(2+) is bound by residues Glu199 and Asp322. The active-site Proton acceptor is Asp322. Pyrroloquinoline quinone contacts are provided by residues Lys349, 408 to 409 (NW), and Val558. Residues 605-684 (DDVAEGTGLY…KIKAFILGTA (80 aa)) form the Cytochrome c domain. Residues Cys618, Cys621, His622, and Met661 each coordinate heme c.

Belongs to the bacterial PQQ dehydrogenase family. In terms of assembly, monomer. The cofactor is pyrroloquinoline quinone. Ca(2+) serves as cofactor. Requires heme c as cofactor.

It is found in the periplasm. The enzyme catalyses butan-1-ol + 2 Fe(III)-[cytochrome c] = butanal + 2 Fe(II)-[cytochrome c] + 2 H(+). Its activity is regulated as follows. Dehydrogenase activity is increased by ammonium ions. In terms of biological role, involved in the metabolism of butane. Could be important in the detoxification of 1-butanol. Catalyzes the oxidation of 1-butanol to butyraldehyde. Also able to use 1-propanol, 2-pentanol, propionaldehyde and butyraldehyde as substrates. This is 1-butanol dehydrogenase (cytochrome c) from Thauera butanivorans (strain ATCC 43655 / DSM 2080 / JCM 20651 / CCUG 51053 / NBRC 103042 / IAM 12574 / Bu B1211) (Pseudomonas butanovora).